A 96-amino-acid polypeptide reads, in one-letter code: Aspartyl/glutamyl-tRNA(Asn/Gln) amidotransferase subunit C (96 aa).

This sequence belongs to the GatC family. As to quaternary structure, heterotrimer of A, B and C subunits.

The catalysed reaction is L-glutamyl-tRNA(Gln) + L-glutamine + ATP + H2O = L-glutaminyl-tRNA(Gln) + L-glutamate + ADP + phosphate + H(+). The enzyme catalyses L-aspartyl-tRNA(Asn) + L-glutamine + ATP + H2O = L-asparaginyl-tRNA(Asn) + L-glutamate + ADP + phosphate + 2 H(+). In terms of biological role, allows the formation of correctly charged Asn-tRNA(Asn) or Gln-tRNA(Gln) through the transamidation of misacylated Asp-tRNA(Asn) or Glu-tRNA(Gln) in organisms which lack either or both of asparaginyl-tRNA or glutaminyl-tRNA synthetases. The reaction takes place in the presence of glutamine and ATP through an activated phospho-Asp-tRNA(Asn) or phospho-Glu-tRNA(Gln). This chain is Aspartyl/glutamyl-tRNA(Asn/Gln) amidotransferase subunit C, found in Bacillus licheniformis (strain ATCC 14580 / DSM 13 / JCM 2505 / CCUG 7422 / NBRC 12200 / NCIMB 9375 / NCTC 10341 / NRRL NRS-1264 / Gibson 46).